Reading from the N-terminus, the 205-residue chain is Guanylate kinase (205 aa).

The 179-residue stretch at 5–183 (GTLYTVSAPS…ALTEFRSIVV (179 aa)) folds into the Guanylate kinase-like domain. Position 12–19 (12–19 (APSGAGKT)) interacts with ATP.

The protein belongs to the guanylate kinase family.

It localises to the cytoplasm. It carries out the reaction GMP + ATP = GDP + ADP. Essential for recycling GMP and indirectly, cGMP. This Saccharophagus degradans (strain 2-40 / ATCC 43961 / DSM 17024) protein is Guanylate kinase.